The primary structure comprises 213 residues: Adenylate kinase (213 aa).

10–15 (GAGKGT) contributes to the ATP binding site. Residues 30–59 (STGDMFRAAMANQTEMGILAKSYIDKGDLV) form an NMP region. Residues T31, R36, 57–59 (DLV), 86–89 (GYPR), and Q93 each bind AMP. The interval 127 to 160 (GRIIHKETGETFHKVFNPPVGDYKEEDFYQREDD) is LID. ATP contacts are provided by residues R128 and 137-138 (TF). Residues R157 and R168 each coordinate AMP. Q196 is an ATP binding site.

The protein belongs to the adenylate kinase family. Monomer.

It localises to the cytoplasm. The enzyme catalyses AMP + ATP = 2 ADP. The protein operates within purine metabolism; AMP biosynthesis via salvage pathway; AMP from ADP: step 1/1. Catalyzes the reversible transfer of the terminal phosphate group between ATP and AMP. Plays an important role in cellular energy homeostasis and in adenine nucleotide metabolism. The sequence is that of Adenylate kinase from Streptococcus suis (strain 98HAH33).